We begin with the raw amino-acid sequence, 108 residues long: PTS system fructose-like EIIB component 1 (108 aa).

The PTS EIIB type-2 domain occupies 1–101 (MSKKLIALCA…AAGIIKEIEE (101 aa)). Catalysis depends on cysteine 11, which acts as the Phosphocysteine intermediate. Cysteine 11 bears the Phosphocysteine; by EIIA mark.

It is found in the cytoplasm. It catalyses the reaction D-fructose(out) + N(pros)-phospho-L-histidyl-[protein] = D-fructose 1-phosphate(in) + L-histidyl-[protein]. Functionally, the phosphoenolpyruvate-dependent sugar phosphotransferase system (sugar PTS), a major carbohydrate active transport system, catalyzes the phosphorylation of incoming sugar substrates concomitantly with their translocation across the cell membrane. The enzyme II FryABC PTS system is involved in fructose transport. The chain is PTS system fructose-like EIIB component 1 (fryB) from Shigella flexneri.